Here is a 768-residue protein sequence, read N- to C-terminus: MSAETATNPPVDTTPGAAPESATNGSNANVAADTTAGEASQTTSSTTPTAQPHSASLYVGELDPSVTEAMLFELFSSIGQVASIRVCRDAVTRRSLGYAYVNYNNTADGERALEDLNYTLIKGRPCRIMWSQRDPALRKTGQGNVFIKNLDTAIDNKALHDTFAAFGNILSCKVAQDEFGNSKGYGFVHYETAEAAQNAIKHVNGMLLNDKKVFVGHHIAKKDRQSKFEEMKANFTNVYVKNIDQDTTEEEFRDLFEKFGEITSATLARDAESGKSRGFGFVNFTSHDNAAAAVEALNDKDFKGQKLYVGRAQKKHEREEELRKQYEAARIEKASKYQGVNLYIKNLSDDIDDEKLRELFSSYGTITSAKVMRDFAPESTSDSEKEAKKDSKEPETKEEEPKDEAGDNAENKDNKENKAESKKSEKKPLGKSKGFGFVCFSSPDEASKAVTEMNQRMVHGKPLYVALAQRKDVRRSQLEASIQARNTIRQQQAAAAAGMPQPFMQPAVFYGPGQQNFIPNQRGGMPFQQPGMVIPGMPGGRHGQFGGFPGQQGGRGMNPNQQIPPNAYGIGAQGLPMGMQGAGIPNGLNYPQMGQVQAPFGRGRGQAPSGQGMPPNVQGMGPGGQYGRGMPVQQGMGRPGQAGRGQGAPAQAVGQRDENASPNGLTLQVLNAAPPAQQKQMLGEAIYPKIQAQQPELAGKITGMLLEMDNAELLALVDDDAALKAKVDEALTVYDEYVKNKGGDSGEPAADANKSKDASQETAEETKS.

Residues 1-11 (MSAETATNPPV) are compositionally biased toward polar residues. Residues 1–52 (MSAETATNPPVDTTPGAAPESATNGSNANVAADTTAGEASQTTSSTTPTAQP) form a disordered region. Positions 39–52 (ASQTTSSTTPTAQP) are enriched in low complexity. RRM domains follow at residues 55-133 (ASLY…WSQR), 143-220 (GNVF…HHIA), 236-314 (TNVY…RAQK), and 340-470 (VNLY…LAQR). Disordered stretches follow at residues 374-428 (DFAP…EKKP), 633-662 (QQGM…NASP), and 739-768 (KNKG…ETKS). Gly residues predominate over residues 637-646 (GRPGQAGRGQ). The 78-residue stretch at 662-739 (PNGLTLQVLN…ALTVYDEYVK (78 aa)) folds into the PABC domain. Basic and acidic residues predominate over residues 753 to 768 (NKSKDASQETAEETKS).

The protein belongs to the polyadenylate-binding protein type-1 family.

It localises to the cytoplasm. The protein localises to the nucleus. Its function is as follows. Binds the poly(A) tail of mRNA. Appears to be an important mediator of the multiple roles of the poly(A) tail in mRNA biogenesis, stability and translation. In the nucleus, involved in both mRNA cleavage and polyadenylation. Is also required for efficient mRNA export to the cytoplasm. Acts in concert with a poly(A)-specific nuclease (PAN) to affect poly(A) tail shortening, which may occur concomitantly with either nucleocytoplasmic mRNA transport or translational initiation. In the cytoplasm, stimulates translation initiation and regulates mRNA decay through translation termination-coupled poly(A) shortening, probably mediated by PAN. This is Polyadenylate-binding protein, cytoplasmic and nuclear (PAB1) from Coccidioides immitis (strain RS) (Valley fever fungus).